A 403-amino-acid chain; its full sequence is Phosphopentomutase (403 aa).

Mn(2+)-binding residues include aspartate 13, aspartate 298, histidine 303, aspartate 339, histidine 340, and histidine 351.

The protein belongs to the phosphopentomutase family. It depends on Mn(2+) as a cofactor.

The protein localises to the cytoplasm. The enzyme catalyses 2-deoxy-alpha-D-ribose 1-phosphate = 2-deoxy-D-ribose 5-phosphate. It catalyses the reaction alpha-D-ribose 1-phosphate = D-ribose 5-phosphate. It participates in carbohydrate degradation; 2-deoxy-D-ribose 1-phosphate degradation; D-glyceraldehyde 3-phosphate and acetaldehyde from 2-deoxy-alpha-D-ribose 1-phosphate: step 1/2. Its function is as follows. Isomerase that catalyzes the conversion of deoxy-ribose 1-phosphate (dRib-1-P) and ribose 1-phosphate (Rib-1-P) to deoxy-ribose 5-phosphate (dRib-5-P) and ribose 5-phosphate (Rib-5-P), respectively. This Streptococcus pneumoniae (strain JJA) protein is Phosphopentomutase.